The sequence spans 129 residues: Transcription factor bHLH138 (129 aa).

The span at 1–18 (MERYTKKNERFKAEEGKG) shows a compositional bias: basic and acidic residues. The tract at residues 1-24 (MERYTKKNERFKAEEGKGSKKSRT) is disordered. The region spanning 19–68 (SKKSRTFLTERERRALFNDRFFDLKNLIPNPTKGGEASIVQDGIVYINEL) is the bHLH domain.

Belongs to the bHLH protein family.

Its subcellular location is the nucleus. The polypeptide is Transcription factor bHLH138 (Arabidopsis thaliana (Mouse-ear cress)).